A 410-amino-acid polypeptide reads, in one-letter code: Transcription factor Dp-1 (410 aa).

N6-acetyllysine is present on lysine 3. At serine 23 the chain carries Phosphoserine. Over residues 73–100 (SNTLVVGSPHTPSTHFASQNQPSDSSPW) the composition is skewed to polar residues. Positions 73–116 (SNTLVVGSPHTPSTHFASQNQPSDSSPWSAGKRNRKGEKNGKGL) are disordered. Over residues 104-116 (KRNRKGEKNGKGL) the composition is skewed to basic residues. The interval 105–127 (RNRKGEKNGKGLRHFSMKVCEKV) is interaction with CEBPA. The DNA-binding element occupies 113 to 195 (GKGLRHFSMK…KKEIKWIGLP (83 aa)). A DEF box motif is present at residues 161–195 (DQKNIRRRVYDALNVLMAMNIISKEKKEIKWIGLP). A dimerization region spans residues 204 to 277 (NLEVERQRRL…KKTVIDCSIS (74 aa)). The tract at residues 211–327 (RRLERIKQKQ…DLKMARSLVP (117 aa)) is enhances binding of RB protein to E2F. The DCB1 stretch occupies residues 214-246 (ERIKQKQSQLQELILQQIAFKNLVQRNRHAEQQ). The tract at residues 259 to 315 (LPFIIVNTSKKTVIDCSISNDKFEYLFNFDNTFEIHDDIEVLKRMGMACGLESGSCS) is DCB2. The disordered stretch occupies residues 370 to 410 (GMLATSSNGSQYSGSRVETPVSYVGEDDEEDDDFNENDEDD). Positions 373–385 (ATSSNGSQYSGSR) are enriched in polar residues. A compositionally biased stretch (acidic residues) spans 394 to 410 (GEDDEEDDDFNENDEDD).

It belongs to the E2F/DP family. As to quaternary structure, component of the E2F:DP transcription factor complex. Forms heterodimers with E2F family members. The complex can interact with hypophosphorylated retinoblastoma protein RB1 and related proteins (RBL1 and RBL2) that inhibit the E2F transactivation domain. This repression involves recruitment of histone deacetylase (HDAC). During the cell cycle, from mid-to-late G1 phase, RB family members become phosphorylated, detach from the DRTF1/E2F complex to render E2F transcriptionally active. Viral oncoproteins, notably E1A, T-antigen and HPV E7, are capable of sequestering RB protein, thus releasing the active complex. Part of the E2F6.com-1 complex in G0 phase is composed of E2F6, MGA, MAX, TFDP1, CBX3, BAT8, EUHMTASE1, RING1, RNF2, MBLR, L3MBTL2 YAF2. Component of the DREAM complex (also named LINC complex) at least composed of E2F4, E2F5, LIN9, LIN37, LIN52, LIN54, MYBL1, MYBL2, RBL1, RBL2, RBBP4, TFDP1 and TFDP2. The complex exists in quiescent cells where it represses cell cycle-dependent genes. It dissociates in S phase when LIN9, LIN37, LIN52 and LIN54 form a subcomplex that binds to MYBL2. The complex TFDP1:E2F1 interacts with CEBPA; the interaction prevents CEBPA binding to target gene promoters and represses its transcriptional activity. Phosphorylation by E2F1-bound cyclin A-CDK2, in the S phase, inhibits E2F-mediated DNA binding and transactivation. Post-translationally, ubiquitinated by the BCR(KBTBD5) complex, leading to its subsequent degradation. In terms of tissue distribution, highest levels in muscle. Also expressed in brain, placenta, liver and kidney. Lower levels in lung and pancreas. Not detected in heart.

The protein localises to the nucleus. Its subcellular location is the cytoplasm. Can stimulate E2F-dependent transcription. Binds DNA cooperatively with E2F family members through the E2 recognition site, 5'-TTTC[CG]CGC-3', found in the promoter region of a number of genes whose products are involved in cell cycle regulation or in DNA replication. The E2F1:DP complex appears to mediate both cell proliferation and apoptosis. Blocks adipocyte differentiation by repressing CEBPA binding to its target gene promoters. The chain is Transcription factor Dp-1 (TFDP1) from Homo sapiens (Human).